The following is a 335-amino-acid chain: Ketol-acid reductoisomerase (NADP(+)) (335 aa).

The KARI N-terminal Rossmann domain maps to 5–185; that stretch reads SKIYTDKDSN…GATRAGVIPT (181 aa). Residues 28–31, S56, and 86–89 each bind NADP(+); these read YGSQ and DMVQ. Residue H111 is part of the active site. G137 contacts NADP(+). Residues 186-331 enclose the KARI C-terminal knotted domain; sequence TFKEETETDL…NQLKDLIQKG (146 aa). The Mg(2+) site is built by D194, E198, E230, and E234. S255 contacts substrate.

This sequence belongs to the ketol-acid reductoisomerase family. The cofactor is Mg(2+).

The catalysed reaction is (2R)-2,3-dihydroxy-3-methylbutanoate + NADP(+) = (2S)-2-acetolactate + NADPH + H(+). It catalyses the reaction (2R,3R)-2,3-dihydroxy-3-methylpentanoate + NADP(+) = (S)-2-ethyl-2-hydroxy-3-oxobutanoate + NADPH + H(+). The protein operates within amino-acid biosynthesis; L-isoleucine biosynthesis; L-isoleucine from 2-oxobutanoate: step 2/4. It participates in amino-acid biosynthesis; L-valine biosynthesis; L-valine from pyruvate: step 2/4. In terms of biological role, involved in the biosynthesis of branched-chain amino acids (BCAA). Catalyzes an alkyl-migration followed by a ketol-acid reduction of (S)-2-acetolactate (S2AL) to yield (R)-2,3-dihydroxy-isovalerate. In the isomerase reaction, S2AL is rearranged via a Mg-dependent methyl migration to produce 3-hydroxy-3-methyl-2-ketobutyrate (HMKB). In the reductase reaction, this 2-ketoacid undergoes a metal-dependent reduction by NADPH to yield (R)-2,3-dihydroxy-isovalerate. In Saccharolobus islandicus (strain L.S.2.15 / Lassen #1) (Sulfolobus islandicus), this protein is Ketol-acid reductoisomerase (NADP(+)).